Consider the following 294-residue polypeptide: Holothin acyltransferase (294 aa).

Residues 17-146 enclose the N-acetyltransferase domain; sequence WTSKPASLEE…SRLVGIHNQQ (130 aa).

The catalysed reaction is marinoloyl-CoA C + holothin = thiomarinol C + CoA. The enzyme catalyses pseudomonoyl-CoA C + holothin = pseudomonic acid C--holothin + CoA. The protein operates within antibiotic biosynthesis. Functionally, acyltransferase that catalyzes the formation of pseudomonic acid C-holothin (PAC-holothin), a thiomarinol analog, from pseudomonoyl-CoA C (PAC-CoA) and holothin. Accepts linear CoA substrates of different lengths, including propionyl-, hexanoyl-, octanoyl-, oleoyl- and dodecanoyl-CoA, readily converting all into the corresponding acyl-holothin adducts. In vivo, is probably involved in the biosynthesis of thiomarinol, a naturally occurring double-headed antibiotic. The protein is Holothin acyltransferase of Pseudoalteromonas sp. (strain SANK 73390).